The chain runs to 489 residues: Pluviatolide synthase (489 aa).

The chain crosses the membrane as a helical span at residues 6-26; the sequence is SVLGLSSTLIIALAITVIFLL. Cys-432 contributes to the heme binding site.

This sequence belongs to the cytochrome P450 family. It depends on heme as a cofactor.

The protein localises to the membrane. It catalyses the reaction (-)-matairesinol + reduced [NADPH--hemoprotein reductase] + O2 = (-)-pluviatolide + oxidized [NADPH--hemoprotein reductase] + 2 H2O + H(+). The protein operates within aromatic compound metabolism; phenylpropanoid biosynthesis. Cytochrome P450 involved in the biosynthesis of etoposide, a chemotherapeutic compound of the topoisomerase inhibitor family. Catalyzes the conversion of matairesinol to pluviatolide. In Podophyllum peltatum (American mandrake), this protein is Pluviatolide synthase.